The following is a 708-amino-acid chain: Ion-translocating oxidoreductase complex subunit C (708 aa).

4Fe-4S ferredoxin-type domains follow at residues Gly369–Tyr397 and Lys407–Phe436. Residues Cys377, Cys380, Cys383, Cys387, Cys416, Cys419, Cys422, and Cys426 each coordinate [4Fe-4S] cluster. Positions Lys599–Ala686 are disordered.

It belongs to the 4Fe4S bacterial-type ferredoxin family. RnfC subfamily. In terms of assembly, the complex is composed of six subunits: RsxA, RsxB, RsxC, RsxD, RsxE and RsxG. Requires [4Fe-4S] cluster as cofactor.

Its subcellular location is the cell inner membrane. Functionally, part of a membrane-bound complex that couples electron transfer with translocation of ions across the membrane. Required to maintain the reduced state of SoxR. The polypeptide is Ion-translocating oxidoreductase complex subunit C (Escherichia coli (strain 55989 / EAEC)).